A 365-amino-acid chain; its full sequence is Ribosomal RNA large subunit methyltransferase F (365 aa).

The interval 1 to 50 (MSKPAVKSVPSATAKTATRAANPRQKAKAPKQAKPEGKGRAKPSKDKPRA) is disordered. Basic and acidic residues predominate over residues 33-50 (AKPEGKGRAKPSKDKPRA).

Belongs to the methyltransferase superfamily. METTL16/RlmF family.

It localises to the cytoplasm. The enzyme catalyses adenosine(1618) in 23S rRNA + S-adenosyl-L-methionine = N(6)-methyladenosine(1618) in 23S rRNA + S-adenosyl-L-homocysteine + H(+). In terms of biological role, specifically methylates the adenine in position 1618 of 23S rRNA. This Shewanella baltica (strain OS195) protein is Ribosomal RNA large subunit methyltransferase F.